A 311-amino-acid polypeptide reads, in one-letter code: HTH-type transcriptional regulator DsdC (311 aa).

One can recognise an HTH lysR-type domain in the interval 15-72; it reads WQLSKMHTFEVAARHQSFALAAEELSLSPSAVSHRINQLEEELGIQLFVRSHRKVELT. The H-T-H motif DNA-binding region spans 32–51; that stretch reads FALAAEELSLSPSAVSHRIN.

This sequence belongs to the LysR transcriptional regulatory family.

Functionally, regulates the expression of the dsdX-dsdA operon. This chain is HTH-type transcriptional regulator DsdC, found in Escherichia coli (strain K12).